The sequence spans 428 residues: Nematode resistance protein-like HSPRO1 (428 aa).

As to quaternary structure, interacts with SNF4.

The protein resides in the cytoplasm. Functionally, positive regulator of basal resistance. This chain is Nematode resistance protein-like HSPRO1 (HSPRO1), found in Arabidopsis thaliana (Mouse-ear cress).